The sequence spans 308 residues: C-4 methylsterol oxidase (308 aa).

The helical transmembrane segment at 56 to 76 (LLFFLTHEIFYFGRCLPWAII) threads the bilayer. The 138-residue stretch at 145 to 282 (WAVFFVLEDT…FRWWDFILDT (138 aa)) folds into the Fatty acid hydroxylase domain. Residues 160–164 (HRGLH) carry the Histidine box-1 motif. The short motif at 173 to 177 (HKQHH) is the Histidine box-2 element. The Histidine box-3 motif lies at 257 to 263 (HHDEHHH).

Belongs to the sterol desaturase family. Fe cation is required as a cofactor.

The protein resides in the endoplasmic reticulum membrane. It catalyses the reaction 4,4-dimethyl-5alpha-cholest-7-en-3beta-ol + 6 Fe(II)-[cytochrome b5] + 3 O2 + 5 H(+) = 4alpha-carboxy-4beta-methyl-5alpha-cholest-7-ene-3beta-ol + 6 Fe(III)-[cytochrome b5] + 4 H2O. The protein operates within steroid biosynthesis; zymosterol biosynthesis; zymosterol from lanosterol: step 3/6. Its function is as follows. C-4 methylsterol oxidase; part of the third module of ergosterol biosynthesis pathway that includes the late steps of the pathway. ERG25 is a catalytic component of the C-4 demethylation complex that catalyzes the conversion of 4,4-dimethylfecosterol into fecosterol via 4-methylfecosterol. Catalyzes the three-step monooxygenation required for the demethylation of 4,4-dimethyl and 4alpha-methylsterols. The third module or late pathway involves the ergosterol synthesis itself through consecutive reactions that mainly occur in the endoplasmic reticulum (ER) membrane. Firstly, the squalene synthase ERG9 catalyzes the condensation of 2 farnesyl pyrophosphate moieties to form squalene, which is the precursor of all steroids. Squalene synthase is crucial for balancing the incorporation of farnesyl diphosphate (FPP) into sterol and nonsterol isoprene synthesis. Secondly, the squalene epoxidase ERG1 catalyzes the stereospecific oxidation of squalene to (S)-2,3-epoxysqualene, which is considered to be a rate-limiting enzyme in steroid biosynthesis. Then, the lanosterol synthase ERG7 catalyzes the cyclization of (S)-2,3 oxidosqualene to lanosterol, a reaction that forms the sterol core. In the next steps, lanosterol is transformed to zymosterol through a complex process involving various demethylation, reduction and desaturation reactions. The lanosterol 14-alpha-demethylase ERG11 (also known as CYP51) catalyzes C14-demethylation of lanosterol to produce 4,4'-dimethyl cholesta-8,14,24-triene-3-beta-ol, which is critical for ergosterol biosynthesis. The C-14 reductase ERG24 reduces the C14=C15 double bond of 4,4-dimethyl-cholesta-8,14,24-trienol to produce 4,4-dimethyl-cholesta-8,24-dienol. 4,4-dimethyl-cholesta-8,24-dienol is substrate of the C-4 demethylation complex ERG25-ERG26-ERG27 in which ERG25 catalyzes the three-step monooxygenation required for the demethylation of 4,4-dimethyl and 4alpha-methylsterols, ERG26 catalyzes the oxidative decarboxylation that results in a reduction of the 3-beta-hydroxy group at the C-3 carbon to an oxo group, and ERG27 is responsible for the reduction of the keto group on the C-3. ERG28 has a role as a scaffold to help anchor ERG25, ERG26 and ERG27 to the endoplasmic reticulum and ERG29 regulates the activity of the iron-containing C4-methylsterol oxidase ERG25. Then, the sterol 24-C-methyltransferase ERG6 catalyzes the methyl transfer from S-adenosyl-methionine to the C-24 of zymosterol to form fecosterol. The C-8 sterol isomerase ERG2 catalyzes the reaction which results in unsaturation at C-7 in the B ring of sterols and thus converts fecosterol to episterol. The sterol-C5-desaturase ERG3 then catalyzes the introduction of a C-5 double bond in the B ring to produce 5-dehydroepisterol. The C-22 sterol desaturase ERG5 further converts 5-dehydroepisterol into ergosta-5,7,22,24(28)-tetraen-3beta-ol by forming the C-22(23) double bond in the sterol side chain. Finally, ergosta-5,7,22,24(28)-tetraen-3beta-ol is substrate of the C-24(28) sterol reductase ERG4 to produce ergosterol. This is C-4 methylsterol oxidase from Candida albicans (strain SC5314 / ATCC MYA-2876) (Yeast).